A 689-amino-acid chain; its full sequence is Glycine--tRNA ligase beta subunit (689 aa).

It belongs to the class-II aminoacyl-tRNA synthetase family. As to quaternary structure, tetramer of two alpha and two beta subunits.

It localises to the cytoplasm. The catalysed reaction is tRNA(Gly) + glycine + ATP = glycyl-tRNA(Gly) + AMP + diphosphate. The protein is Glycine--tRNA ligase beta subunit of Escherichia coli (strain K12 / MC4100 / BW2952).